The chain runs to 159 residues: Transcription antitermination protein NusB (159 aa).

Belongs to the NusB family.

In terms of biological role, involved in transcription antitermination. Required for transcription of ribosomal RNA (rRNA) genes. Binds specifically to the boxA antiterminator sequence of the ribosomal RNA (rrn) operons. The sequence is that of Transcription antitermination protein NusB from Xanthomonas campestris pv. campestris (strain 8004).